The sequence spans 250 residues: Triosephosphate isomerase (250 aa).

Residue 9–11 (NWK) participates in substrate binding. Histidine 95 (electrophile) is an active-site residue. The active-site Proton acceptor is glutamate 167. Residues glycine 173, serine 212, and 233 to 234 (GG) each bind substrate.

This sequence belongs to the triosephosphate isomerase family. Homodimer.

The protein localises to the cytoplasm. The catalysed reaction is D-glyceraldehyde 3-phosphate = dihydroxyacetone phosphate. It functions in the pathway carbohydrate biosynthesis; gluconeogenesis. Its pathway is carbohydrate degradation; glycolysis; D-glyceraldehyde 3-phosphate from glycerone phosphate: step 1/1. In terms of biological role, involved in the gluconeogenesis. Catalyzes stereospecifically the conversion of dihydroxyacetone phosphate (DHAP) to D-glyceraldehyde-3-phosphate (G3P). In Psychromonas ingrahamii (strain DSM 17664 / CCUG 51855 / 37), this protein is Triosephosphate isomerase.